The primary structure comprises 358 residues: Phospho-N-acetylmuramoyl-pentapeptide-transferase (358 aa).

The next 10 helical transmembrane spans lie at 19–39 (YLTL…VLIG), 71–91 (TMGG…WADL), 95–115 (YVWV…IDDY), 126–146 (LIAR…ALYL), 166–186 (VMPQ…VGTS), 194–214 (GLDG…AIFA), 237–257 (LVIV…FNTY), 261–281 (VFMG…IAVL), 286–306 (IVLV…ILQV), and 336–356 (VIVR…ATLK).

This sequence belongs to the glycosyltransferase 4 family. MraY subfamily. The cofactor is Mg(2+).

It localises to the cell inner membrane. The enzyme catalyses UDP-N-acetyl-alpha-D-muramoyl-L-alanyl-gamma-D-glutamyl-meso-2,6-diaminopimeloyl-D-alanyl-D-alanine + di-trans,octa-cis-undecaprenyl phosphate = di-trans,octa-cis-undecaprenyl diphospho-N-acetyl-alpha-D-muramoyl-L-alanyl-D-glutamyl-meso-2,6-diaminopimeloyl-D-alanyl-D-alanine + UMP. It participates in cell wall biogenesis; peptidoglycan biosynthesis. In terms of biological role, catalyzes the initial step of the lipid cycle reactions in the biosynthesis of the cell wall peptidoglycan: transfers peptidoglycan precursor phospho-MurNAc-pentapeptide from UDP-MurNAc-pentapeptide onto the lipid carrier undecaprenyl phosphate, yielding undecaprenyl-pyrophosphoryl-MurNAc-pentapeptide, known as lipid I. The polypeptide is Phospho-N-acetylmuramoyl-pentapeptide-transferase (Pseudoalteromonas atlantica (strain T6c / ATCC BAA-1087)).